The chain runs to 314 residues: Methionyl-tRNA formyltransferase (314 aa).

110–113 (SLLP) serves as a coordination point for (6S)-5,6,7,8-tetrahydrofolate.

This sequence belongs to the Fmt family.

The enzyme catalyses L-methionyl-tRNA(fMet) + (6R)-10-formyltetrahydrofolate = N-formyl-L-methionyl-tRNA(fMet) + (6S)-5,6,7,8-tetrahydrofolate + H(+). In terms of biological role, attaches a formyl group to the free amino group of methionyl-tRNA(fMet). The formyl group appears to play a dual role in the initiator identity of N-formylmethionyl-tRNA by promoting its recognition by IF2 and preventing the misappropriation of this tRNA by the elongation apparatus. The polypeptide is Methionyl-tRNA formyltransferase (Bacillus cereus (strain AH187)).